The sequence spans 284 residues: Shikimate kinase (284 aa).

85-95 (PLAAGLKSSSA) provides a ligand contact to ATP.

This sequence belongs to the GHMP kinase family. Archaeal shikimate kinase subfamily.

It localises to the cytoplasm. The enzyme catalyses shikimate + ATP = 3-phosphoshikimate + ADP + H(+). It participates in metabolic intermediate biosynthesis; chorismate biosynthesis; chorismate from D-erythrose 4-phosphate and phosphoenolpyruvate: step 5/7. In Halobacterium salinarum (strain ATCC 29341 / DSM 671 / R1), this protein is Shikimate kinase.